The primary structure comprises 342 residues: N-acetyl-gamma-glutamyl-phosphate reductase (342 aa).

The active site involves Cys149.

Belongs to the NAGSA dehydrogenase family. Type 1 subfamily.

It is found in the cytoplasm. It carries out the reaction N-acetyl-L-glutamate 5-semialdehyde + phosphate + NADP(+) = N-acetyl-L-glutamyl 5-phosphate + NADPH + H(+). The protein operates within amino-acid biosynthesis; L-arginine biosynthesis; N(2)-acetyl-L-ornithine from L-glutamate: step 3/4. Its function is as follows. Catalyzes the NADPH-dependent reduction of N-acetyl-5-glutamyl phosphate to yield N-acetyl-L-glutamate 5-semialdehyde. This Nitrosomonas europaea (strain ATCC 19718 / CIP 103999 / KCTC 2705 / NBRC 14298) protein is N-acetyl-gamma-glutamyl-phosphate reductase.